Consider the following 700-residue polypeptide: MSADKFYIEKELSWLSFNERVLQEAADKTVPLIERIRFLGIFSNNLDEFYKVRFSDVKRRILINREQGGNDISKHLLSKMQSKALKLNERFDELYNELIRDMARRHIFLVNESQLDEAQQKWIIKYFQKEVLPHITPLMLTDEIDVLQFLKDEYAYIAVELKQQEQAKYALLEIPTDHLPRFIMVPEQKGKRKKTIILLDNIIRFCLNDIFRGFFDYDELNGYAMKMTRDAEYDLRHEVEYSLLEQMSEGLSQRLTALPVRFVYERDMPEDMLKYLCYKLKISHYDSLIPGGRYHNFKDFIAFPNVGRDYLENKPLPPLACADFEGYANAFDAIRNQDILLHYPYHSFEHITELVRQASFDPKVVSIKINVYRVAKNSRLMNSLIDAVHNGKRVTVVVELQARFDEEANIEWSKRLTDAGVHVIFGVPGMKIHAKLLLITRREEQGFVRYAHIGTGNFHERTARIYTDFSLLTADQELAAEVRGVFSYIMNPFRPIKFRHLIVSPRNSRSQLYRLLDREIHNAQAGKKASITLKVNNLVDKGLISKLYAASSAGVKIRMIIRGMCSLVPGLEGISENIEIISIIDRFLEHPRVLVVHNDGDPQVFISSADWMERNIDNRIEVMSPVRDARIKQRIIDILSIQFTDTVKARRIDKEMSNNYVERGNRKKIRSQIAIYDYLKNVEKHTRKQKGQVEPNDNNE.

ATP is bound at residue asparagine 45. Residues arginine 373 and arginine 403 each coordinate Mg(2+). A PLD phosphodiesterase 1 domain is found at 428–462; that stretch reads PGMKIHAKLLLITRREEQGFVRYAHIGTGNFHERT. Histidine 433 acts as the Phosphohistidine intermediate in catalysis. ATP is bound by residues tyrosine 466, arginine 562, and histidine 590. The PLD phosphodiesterase 2 domain occupies 585–615; the sequence is DRFLEHPRVLVVHNDGDPQVFISSADWMERN.

This sequence belongs to the polyphosphate kinase 1 (PPK1) family. Mg(2+) serves as cofactor. An intermediate of this reaction is the autophosphorylated ppk in which a phosphate is covalently linked to a histidine residue through a N-P bond.

The enzyme catalyses [phosphate](n) + ATP = [phosphate](n+1) + ADP. Its function is as follows. Catalyzes the reversible transfer of the terminal phosphate of ATP to form a long-chain polyphosphate (polyP). In Vibrio vulnificus (strain YJ016), this protein is Polyphosphate kinase.